The chain runs to 288 residues: Putative hydrolase LipZ (288 aa).

This sequence belongs to the AB hydrolase superfamily.

The sequence is that of Putative hydrolase LipZ from Mycobacterium tuberculosis (strain CDC 1551 / Oshkosh).